Here is a 601-residue protein sequence, read N- to C-terminus: Transcription factor Ken (601 aa).

The BTB domain occupies Ala-33–Ser-101. 3 disordered regions span residues Ala-188–Pro-276, Leu-331–Pro-365, and Asp-471–Asn-491. Composition is skewed to basic and acidic residues over residues Glu-190–Lys-200 and Cys-207–Lys-216. A compositionally biased stretch (polar residues) spans Asn-223–Gly-234. A compositionally biased stretch (low complexity) spans Ser-235–Gln-247. Over residues Gln-248–His-258 the composition is skewed to basic residues. Residues Asn-259 to Asn-275 are compositionally biased toward low complexity. Residues Arg-476–Ser-490 show a composition bias toward low complexity. 3 consecutive C2H2-type zinc fingers follow at residues Tyr-500–His-522, Phe-528–His-551, and Tyr-567–His-590.

Expressed from stage 5 in two rather faint stripes at positions of 64% (anterior domain; AD) and 17% (posterior domain; PD) egg length. During early gastrulation, at stage 6, these two stripes become more evident and detectable at the region posterior to the cephalic furrow and in the hindgut primordium. The AD disappears as gastrulation proceeds, while the PD remains. At stage 15, the AD appears again in the foregut, and PD expression in the hindgut and anal pad. In imaginal disks, it is ubiquitously expressed in both males and females in genital and eye-antennal disks. Not expressed in the brain. In genital disks, it is expressed along the margin of the anterior bulbus in males, while in females it is expressed in the posterior compartment along the anterior-posterior border, with medial expansion in the most posterior region.

Its subcellular location is the nucleus. Functionally, transcription factor required for terminalia development. Negative regulator of the JAK/STAT pathway: represses JAK/STAT-dependent expression of ventral veins lacking (vvl) in the posterior spiracles. In Drosophila melanogaster (Fruit fly), this protein is Transcription factor Ken (ken).